A 583-amino-acid polypeptide reads, in one-letter code: 15-cis-phytoene desaturase, chloroplastic/chromoplastic (583 aa).

The N-terminal 111 residues, 1-111 (MPQIGLVSAV…FRASPRPTKP (111 aa)), are a transit peptide targeting the chloroplast and chromoplast. FAD-binding positions include 118 to 134 (GAGL…ADAG), 141 to 142 (EA), Lys149, 166 to 167 (HI), and Tyr172. Arg307 is a substrate binding site. Residues Ile349 and Asp538 each coordinate FAD. A substrate-binding site is contributed by Ala546. Met548 provides a ligand contact to FAD.

The protein belongs to the carotenoid/retinoid oxidoreductase family. Homotetramer. Requires FAD as cofactor.

The protein resides in the plastid. It is found in the chloroplast. The protein localises to the chromoplast. Its subcellular location is the membrane. It catalyses the reaction 2 a plastoquinone + 15-cis-phytoene = 9,9',15-tri-cis-zeta-carotene + 2 a plastoquinol. Its pathway is carotenoid biosynthesis; lycopene biosynthesis. Functionally, converts phytoene into zeta-carotene via the intermediary of phytofluene by the symmetrical introduction of two double bonds at the C-11 and C-11' positions of phytoene with a concomitant isomerization of two neighboring double bonds at the C9 and C9' positions from trans to cis. This chain is 15-cis-phytoene desaturase, chloroplastic/chromoplastic (PDS), found in Solanum lycopersicum (Tomato).